A 337-amino-acid polypeptide reads, in one-letter code: 5-formaminoimidazole-4-carboxamide-1-(beta)-D-ribofuranosyl 5'-monophosphate synthetase (337 aa).

5-amino-1-(5-phospho-beta-D-ribosyl)imidazole-4-carboxamide contacts are provided by H9 and S73. In terms of domain architecture, ATP-grasp spans 94-324; that stretch reads KKIFEWEADQ…IGRRIAREIR (231 aa). Residues 124–184 and E206 each bind ATP; that span reads PEDV…VPMY. N234 serves as a coordination point for 5-amino-1-(5-phospho-beta-D-ribosyl)imidazole-4-carboxamide. The Mg(2+) site is built by E273 and E286.

The protein belongs to the phosphohexose mutase family. Mg(2+) is required as a cofactor. Requires Mn(2+) as cofactor.

It catalyses the reaction 5-amino-1-(5-phospho-beta-D-ribosyl)imidazole-4-carboxamide + formate + ATP = 5-formamido-1-(5-phospho-D-ribosyl)imidazole-4-carboxamide + ADP + phosphate. It participates in purine metabolism; IMP biosynthesis via de novo pathway; 5-formamido-1-(5-phospho-D-ribosyl)imidazole-4-carboxamide from 5-amino-1-(5-phospho-D-ribosyl)imidazole-4-carboxamide (formate route): step 1/1. Catalyzes the ATP- and formate-dependent formylation of 5-aminoimidazole-4-carboxamide-1-beta-d-ribofuranosyl 5'-monophosphate (AICAR) to 5-formaminoimidazole-4-carboxamide-1-beta-d-ribofuranosyl 5'-monophosphate (FAICAR) in the absence of folates. This Saccharolobus solfataricus (strain ATCC 35092 / DSM 1617 / JCM 11322 / P2) (Sulfolobus solfataricus) protein is 5-formaminoimidazole-4-carboxamide-1-(beta)-D-ribofuranosyl 5'-monophosphate synthetase.